Here is a 364-residue protein sequence, read N- to C-terminus: Coproporphyrin III ferrochelatase (364 aa).

Positions 29 and 118 each coordinate Fe-coproporphyrin III. Fe(2+) contacts are provided by His-169 and Glu-250.

It belongs to the ferrochelatase family.

Its subcellular location is the cytoplasm. The catalysed reaction is Fe-coproporphyrin III + 2 H(+) = coproporphyrin III + Fe(2+). The protein operates within porphyrin-containing compound metabolism; protoheme biosynthesis. In terms of biological role, involved in coproporphyrin-dependent heme b biosynthesis. Catalyzes the insertion of ferrous iron into coproporphyrin III to form Fe-coproporphyrin III. The chain is Coproporphyrin III ferrochelatase from Streptococcus pneumoniae serotype 4 (strain ATCC BAA-334 / TIGR4).